The primary structure comprises 251 residues: Pyrroline-5-carboxylate reductase (251 aa).

It belongs to the pyrroline-5-carboxylate reductase family.

The protein localises to the cytoplasm. It catalyses the reaction L-proline + NADP(+) = (S)-1-pyrroline-5-carboxylate + NADPH + 2 H(+). It carries out the reaction L-proline + NAD(+) = (S)-1-pyrroline-5-carboxylate + NADH + 2 H(+). It functions in the pathway amino-acid biosynthesis; L-proline biosynthesis; L-proline from L-glutamate 5-semialdehyde: step 1/1. Its function is as follows. Catalyzes the reduction of 1-pyrroline-5-carboxylate (PCA) to L-proline. The chain is Pyrroline-5-carboxylate reductase (proC) from Methanobrevibacter smithii.